A 281-amino-acid polypeptide reads, in one-letter code: MIDTVTDLSRLRGIVADWRRQGLRVALVPTMGNLHAGHFSLVMLARHYADRVVSSVFVNPTQFGPHEDFQRYPRTPEADMRGLENVGCDVLWLPSVETMYPLGTERTVRLFVPCVSDVLEGTFRPGHFEGVCTVVARLFNQVLPDVAVFGKKDYQQLVVIRQMVVDLAFPIEILGGCIVRESDGLAMSSRNQYLSMQQRPQAAEIHRTLIAMRDAVMSGGVHADVEAEAVRRLEAAGFQVDYAVIRLSDLGEPIDGIVISPGIALVAARLGNTRLIDNLEF.

Residue 31-38 (MGNLHAGH) coordinates ATP. Catalysis depends on His38, which acts as the Proton donor. Gln62 is a binding site for (R)-pantoate. Gln62 lines the beta-alanine pocket. 150–153 (GKKD) is an ATP binding site. Residue Gln156 coordinates (R)-pantoate. ATP contacts are provided by residues Val179 and 187–190 (MSSR).

The protein belongs to the pantothenate synthetase family. As to quaternary structure, homodimer.

Its subcellular location is the cytoplasm. The catalysed reaction is (R)-pantoate + beta-alanine + ATP = (R)-pantothenate + AMP + diphosphate + H(+). It participates in cofactor biosynthesis; (R)-pantothenate biosynthesis; (R)-pantothenate from (R)-pantoate and beta-alanine: step 1/1. In terms of biological role, catalyzes the condensation of pantoate with beta-alanine in an ATP-dependent reaction via a pantoyl-adenylate intermediate. This is Pantothenate synthetase from Xylella fastidiosa (strain M12).